The primary structure comprises 142 residues: Large ribosomal subunit protein uL11 (142 aa).

It belongs to the universal ribosomal protein uL11 family. As to quaternary structure, part of the ribosomal stalk of the 50S ribosomal subunit. Interacts with L10 and the large rRNA to form the base of the stalk. L10 forms an elongated spine to which L12 dimers bind in a sequential fashion forming a multimeric L10(L12)X complex. One or more lysine residues are methylated.

Its function is as follows. Forms part of the ribosomal stalk which helps the ribosome interact with GTP-bound translation factors. The sequence is that of Large ribosomal subunit protein uL11 from Klebsiella pneumoniae subsp. pneumoniae (strain ATCC 700721 / MGH 78578).